The primary structure comprises 361 residues: G kinase-anchoring protein 1-A (361 aa).

Disordered regions lie at residues 22–111 (DSSS…EDWQ) and 140–183 (FEES…KDFQ). The segment covering 35–48 (AHSSGKAHSGSAAR) has biased composition (low complexity). A coiled-coil region spans residues 51 to 79 (NKGNEKKKEKRRKKKEQQQSEANELRNLA). Positions 158 to 168 (KVNKKDKRKNN) are enriched in basic residues. Coiled coils occupy residues 246–296 (KDGR…QEGE) and 326–346 (AALE…VKYQ).

The protein belongs to the GKAP1 family.

Its subcellular location is the golgi apparatus. Functionally, may play a role in the regulation of insulin-dependent IRS1 tyrosine phosphorylation in adipocytes. The chain is G kinase-anchoring protein 1-A (gkap1-a) from Xenopus laevis (African clawed frog).